The following is a 245-amino-acid chain: 1-(5-phosphoribosyl)-5-[(5-phosphoribosylamino)methylideneamino] imidazole-4-carboxamide isomerase (245 aa).

Aspartate 11 functions as the Proton acceptor in the catalytic mechanism. The Proton donor role is filled by aspartate 132.

The protein belongs to the HisA/HisF family.

It localises to the cytoplasm. It carries out the reaction 1-(5-phospho-beta-D-ribosyl)-5-[(5-phospho-beta-D-ribosylamino)methylideneamino]imidazole-4-carboxamide = 5-[(5-phospho-1-deoxy-D-ribulos-1-ylimino)methylamino]-1-(5-phospho-beta-D-ribosyl)imidazole-4-carboxamide. Its pathway is amino-acid biosynthesis; L-histidine biosynthesis; L-histidine from 5-phospho-alpha-D-ribose 1-diphosphate: step 4/9. The polypeptide is 1-(5-phosphoribosyl)-5-[(5-phosphoribosylamino)methylideneamino] imidazole-4-carboxamide isomerase (Bacillus pumilus (strain SAFR-032)).